We begin with the raw amino-acid sequence, 142 residues long: Peptide methionine sulfoxide reductase MsrB (142 aa).

Residues 2-125 (IKKDKNELNE…NSAAIQFIPY (124 aa)) form the MsrB domain. Cys-114 functions as the Nucleophile in the catalytic mechanism.

This sequence belongs to the MsrB Met sulfoxide reductase family.

It carries out the reaction L-methionyl-[protein] + [thioredoxin]-disulfide + H2O = L-methionyl-(R)-S-oxide-[protein] + [thioredoxin]-dithiol. The sequence is that of Peptide methionine sulfoxide reductase MsrB from Staphylococcus haemolyticus (strain JCSC1435).